The chain runs to 288 residues: Geranylgeranyl diphosphate synthase (288 aa).

Residues arginine 43 and histidine 73 each coordinate isopentenyl diphosphate. Positions 80 and 86 each coordinate Mg(2+). Residue arginine 91 participates in (2E,6E)-farnesyl diphosphate binding. Arginine 92 contacts isopentenyl diphosphate. (2E,6E)-farnesyl diphosphate-binding residues include lysine 170, threonine 171, and glutamine 205.

The protein belongs to the FPP/GGPP synthase family. The cofactor is Mg(2+).

The enzyme catalyses isopentenyl diphosphate + (2E,6E)-farnesyl diphosphate = (2E,6E,10E)-geranylgeranyl diphosphate + diphosphate. It participates in isoprenoid biosynthesis; geranylgeranyl diphosphate biosynthesis; geranylgeranyl diphosphate from farnesyl diphosphate and isopentenyl diphosphate: step 1/1. Catalyzes the condensation of farnesyl diphosphate (FPP) and isopentenyl diphosphate (IPP) to yield geranylgeranyl diphosphate (GGPP) needed for biosynthesis of carotenoids and diterpenes. The chain is Geranylgeranyl diphosphate synthase (crtE) from Cereibacter sphaeroides (strain ATCC 17023 / DSM 158 / JCM 6121 / CCUG 31486 / LMG 2827 / NBRC 12203 / NCIMB 8253 / ATH 2.4.1.) (Rhodobacter sphaeroides).